The primary structure comprises 125 residues: Oxytocin-neurophysin 1 (125 aa).

The signal sequence occupies residues 1–19; the sequence is MAGSSLACCLLGLLALTSA. Cys-20 and Cys-25 are disulfide-bonded. Position 28 is a glycine amide (Gly-28). Cystine bridges form between Cys-41–Cys-85, Cys-44–Cys-58, Cys-52–Cys-75, Cys-59–Cys-65, Cys-92–Cys-104, Cys-98–Cys-116, and Cys-105–Cys-110.

Belongs to the vasopressin/oxytocin family. In terms of assembly, interacts with oxytocin receptor (Ki=1.5 nM). Interacts with vasopressin V1aR/AVPR1A (Ki=37 nM), V1bR/AVPR1B (Ki=222 nM), and V2R/AVPR2 receptors (Ki=823 nM).

Functionally, neurophysin 1 specifically binds oxytocin. Its function is as follows. Oxytocin causes contraction of the smooth muscle of the uterus and of the mammary gland. Acts by binding to oxytocin receptor (OXTR). This is Oxytocin-neurophysin 1 (OXT) from Ovis aries (Sheep).